A 414-amino-acid chain; its full sequence is Putative cytochrome P450 126 (414 aa).

Cysteine 363 serves as a coordination point for heme.

This sequence belongs to the cytochrome P450 family. Heme is required as a cofactor.

In Mycobacterium tuberculosis (strain CDC 1551 / Oshkosh), this protein is Putative cytochrome P450 126 (cyp126).